Consider the following 378-residue polypeptide: Aminomethyltransferase (378 aa).

This sequence belongs to the GcvT family. As to quaternary structure, the glycine cleavage system is composed of four proteins: P, T, L and H.

It catalyses the reaction N(6)-[(R)-S(8)-aminomethyldihydrolipoyl]-L-lysyl-[protein] + (6S)-5,6,7,8-tetrahydrofolate = N(6)-[(R)-dihydrolipoyl]-L-lysyl-[protein] + (6R)-5,10-methylene-5,6,7,8-tetrahydrofolate + NH4(+). Functionally, the glycine cleavage system catalyzes the degradation of glycine. In Acidobacterium capsulatum (strain ATCC 51196 / DSM 11244 / BCRC 80197 / JCM 7670 / NBRC 15755 / NCIMB 13165 / 161), this protein is Aminomethyltransferase.